We begin with the raw amino-acid sequence, 30 residues long: Dendrotoxin A (30 aa).

C3 and C22 are disulfide-bonded.

Belongs to the three-finger toxin family. Short-chain subfamily. Acn-esterase inhibitor sub-subfamily. Post-translationally, contains 4 disulfide bonds. Expressed by the venom gland.

The protein localises to the secreted. Inhibits acetylcholinesterase. Has been described to inhibit both the slowly and the rapidly inactivating phases of potassium efflux. This is Dendrotoxin A from Dendroaspis angusticeps (Eastern green mamba).